The following is a 103-amino-acid chain: ATP-dependent Clp protease adapter protein ClpS 1 (103 aa).

It belongs to the ClpS family. As to quaternary structure, binds to the N-terminal domain of the chaperone ClpA.

In terms of biological role, involved in the modulation of the specificity of the ClpAP-mediated ATP-dependent protein degradation. The polypeptide is ATP-dependent Clp protease adapter protein ClpS 1 (Rhodopseudomonas palustris (strain ATCC BAA-98 / CGA009)).